Consider the following 459-residue polypeptide: uncharacterized protein (459 aa).

The TRAM domain occupies 9–67 (KLEVGQTFPVTIKRLGINGEGVGYFKRQVVFIPGALPGEEVVAETTKIQRGFAEAKVKK). [4Fe-4S] cluster contacts are provided by C80, C86, C89, and C168. S-adenosyl-L-methionine-binding residues include Q292, Y321, D342, and D390. The active-site Nucleophile is C417.

Belongs to the class I-like SAM-binding methyltransferase superfamily. RNA M5U methyltransferase family.

This is an uncharacterized protein from Bacillus anthracis.